A 151-amino-acid chain; its full sequence is Small ribosomal subunit protein uS11A (151 aa).

Residues 131–151 (DVTPIPSDSTRRKGGRRGRRL) form a disordered region. Over residues 142–151 (RKGGRRGRRL) the composition is skewed to basic residues.

This sequence belongs to the universal ribosomal protein uS11 family.

In Drosophila melanogaster (Fruit fly), this protein is Small ribosomal subunit protein uS11A.